A 309-amino-acid polypeptide reads, in one-letter code: Probable manganese-dependent inorganic pyrophosphatase (309 aa).

Mn(2+) is bound by residues His-9, Asp-13, Asp-15, Asp-75, His-97, and Asp-149.

This sequence belongs to the PPase class C family. It depends on Mn(2+) as a cofactor.

It is found in the cytoplasm. It carries out the reaction diphosphate + H2O = 2 phosphate + H(+). The sequence is that of Probable manganese-dependent inorganic pyrophosphatase from Bacillus velezensis (strain DSM 23117 / BGSC 10A6 / LMG 26770 / FZB42) (Bacillus amyloliquefaciens subsp. plantarum).